The primary structure comprises 601 residues: Ribosomal oxygenase 1 (601 aa).

The span at 1 to 11 (MAACGAEERQR) shows a compositional bias: basic and acidic residues. The interval 1-149 (MAACGAEERQ…PGGGGVPGLL (149 aa)) is disordered. The segment covering 61–70 (ERAAPPQGAA) has biased composition (low complexity). Residues 73-87 (DRVERAGSSEAKQGD) are compositionally biased toward basic and acidic residues. Positions 254–399 (CSLRLLSPQA…DFLEKLLPAA (146 aa)) constitute a JmjC domain. Fe cation-binding residues include histidine 300, aspartate 302, and histidine 365.

It belongs to the ROX family. NO66 subfamily. Fe(2+) is required as a cofactor.

It is found in the nucleus. Its subcellular location is the nucleolus. The protein resides in the nucleoplasm. It catalyses the reaction N(6),N(6)-dimethyl-L-lysyl(36)-[histone H3] + 2 2-oxoglutarate + 2 O2 = L-lysyl(36)-[histone H3] + 2 formaldehyde + 2 succinate + 2 CO2. The enzyme catalyses N(6)-methyl-L-lysyl-[protein] + 2-oxoglutarate + O2 = L-lysyl-[protein] + formaldehyde + succinate + CO2. It carries out the reaction L-histidyl-[protein] + 2-oxoglutarate + O2 = (3S)-3-hydroxy-L-histidyl-[protein] + succinate + CO2. In terms of biological role, oxygenase that can act as both a histone lysine demethylase and a ribosomal histidine hydroxylase. Specifically demethylates 'Lys-4' (H3K4me) and 'Lys-36' (H3K36me) of histone H3, thereby playing a central role in histone code. Preferentially demethylates trimethylated H3 'Lys-4' (H3K4me3) and monomethylated H3 'Lys-4' (H3K4me1) residues, while it has weaker activity for dimethylated H3 'Lys-36' (H3K36me2). Also catalyzes demethylation of non-histone proteins. Also catalyzes the hydroxylation of 60S ribosomal protein L8 on 'His-216', thereby playing a role in ribosome biogenesis. The sequence is that of Ribosomal oxygenase 1 (RIOX1) from Gallus gallus (Chicken).